Here is a 2101-residue protein sequence, read N- to C-terminus: General transcription factor 3C polypeptide 1 (2101 aa).

The span at Gly473 to Ser487 shows a compositional bias: acidic residues. 2 disordered regions span residues Gly473 to His574 and Asn588 to His609. Basic residues predominate over residues Gly492–Ala503. The segment covering Arg504 to Ser513 has biased composition (low complexity). Lys534 is covalently cross-linked (Glycyl lysine isopeptide (Lys-Gly) (interchain with G-Cter in SUMO2)). Phosphoserine is present on Ser667. Disordered stretches follow at residues Ser718–Gly772 and Gly820–Glu864. Residues Arg747–Pro759 show a composition bias toward polar residues. Basic and acidic residues-rich tracts occupy residues Glu760–Met771 and His826–Ser836. Residues Lys770 and Lys833 each participate in a glycyl lysine isopeptide (Lys-Gly) (interchain with G-Cter in SUMO2) cross-link. Ser1063 bears the Phosphoserine mark. Residues Glu1186–Thr1196 are compositionally biased toward basic and acidic residues. Disordered regions lie at residues Glu1186–Arg1239, Lys1598–Glu1627, and Asp1822–Gln1923. Residue Thr1196 is modified to Phosphothreonine. Residues Arg1199 to Lys1215 show a composition bias toward basic residues. Basic and acidic residues predominate over residues Glu1229–Arg1239. The span at Leu1606–Glu1617 shows a compositional bias: acidic residues. Positions Asp1822–Gln1831 are enriched in basic and acidic residues. Phosphoserine is present on residues Ser1854 and Ser1890. Residues Glu1900–Pro1910 show a composition bias toward low complexity.

The protein belongs to the TFIIIC subunit 1 family. Part of the TFIIIC subcomplex TFIIIC2, consisting of six subunits, GTF3C1, GTF3C2, GTF3C3, GTF3C4, GTF3C5 and GTF3C6. Interacts with IGHMBP2. Interacts with MAF1.

Its subcellular location is the nucleus. In terms of biological role, required for RNA polymerase III-mediated transcription. Component of TFIIIC that initiates transcription complex assembly on tRNA and is required for transcription of 5S rRNA and other stable nuclear and cytoplasmic RNAs. Binds to the box B promoter element. This is General transcription factor 3C polypeptide 1 (Gtf3c1) from Mus musculus (Mouse).